Here is a 327-residue protein sequence, read N- to C-terminus: Embigin (327 aa).

Residues 1–32 (MRALPGLLEARARTPRLLLLQCLLAAARPSSA) form the signal peptide. Residues 33–260 (DGSAPDSPFT…ELVVLSYLVP (228 aa)) lie on the Extracellular side of the membrane. N-linked (GlcNAc...) asparagine glycosylation is found at Asn-54, Asn-61, Asn-75, Asn-85, Asn-100, Asn-189, Asn-196, Asn-213, and Asn-218. Ig-like V-type domains lie at 71 to 158 (PVEK…NFKV) and 159 to 253 (PELH…IELV). Disulfide bonds link Cys-88/Cys-142 and Cys-180/Cys-237. A helical transmembrane segment spans residues 261–281 (LKPFLVIVAEVILLVATILLC). Over 282 to 327 (EKYTQKKKKHSDEGKEFEQIEQLKSDDSNGIENNVPRHRKNESLGQ) the chain is Cytoplasmic. The segment at 287 to 327 (KKKKHSDEGKEFEQIEQLKSDDSNGIENNVPRHRKNESLGQ) is disordered. Over residues 291-308 (HSDEGKEFEQIEQLKSDD) the composition is skewed to basic and acidic residues. At Ser-309 the chain carries Phosphoserine.

As to quaternary structure, interacts with SLC16A1, SLC16A6 and SLC16A7.

The protein resides in the cell membrane. It localises to the synapse. Functionally, plays a role in the outgrowth of motoneurons and in the formation of neuromuscular junctions. Following muscle denervation, promotes nerve terminal sprouting and the formation of additional acetylcholine receptor clusters at synaptic sites without affecting terminal Schwann cell number or morphology. Delays the retraction of terminal sprouts following re-innervation of denervated endplates. May play a role in targeting the monocarboxylate transporters SLC16A1, SLC16A6 and SLC16A7 to the cell membrane. The sequence is that of Embigin (EMB) from Homo sapiens (Human).